Consider the following 438-residue polypeptide: Serine--tRNA ligase (438 aa).

An L-serine-binding site is contributed by 243–245 (TAE). 274-276 (RSE) provides a ligand contact to ATP. An L-serine-binding site is contributed by Glu297. 361–364 (EISS) is a binding site for ATP. Position 396 (Ser396) interacts with L-serine.

This sequence belongs to the class-II aminoacyl-tRNA synthetase family. Type-1 seryl-tRNA synthetase subfamily. Homodimer. The tRNA molecule binds across the dimer.

Its subcellular location is the cytoplasm. The enzyme catalyses tRNA(Ser) + L-serine + ATP = L-seryl-tRNA(Ser) + AMP + diphosphate + H(+). It catalyses the reaction tRNA(Sec) + L-serine + ATP = L-seryl-tRNA(Sec) + AMP + diphosphate + H(+). It functions in the pathway aminoacyl-tRNA biosynthesis; selenocysteinyl-tRNA(Sec) biosynthesis; L-seryl-tRNA(Sec) from L-serine and tRNA(Sec): step 1/1. Functionally, catalyzes the attachment of serine to tRNA(Ser). Is also able to aminoacylate tRNA(Sec) with serine, to form the misacylated tRNA L-seryl-tRNA(Sec), which will be further converted into selenocysteinyl-tRNA(Sec). The protein is Serine--tRNA ligase of Ralstonia pickettii (strain 12J).